Reading from the N-terminus, the 218-residue chain is Acetoacetyl-CoA:acetate/butyrate CoA transferase alpha subunit (218 aa).

Residue 24 to 30 (GGFLNCG) participates in CoA binding.

The protein belongs to the 3-oxoacid CoA-transferase subunit A family. As to quaternary structure, heterotetramer composed of two alpha subunits (CtfA) and two beta subunits (CtfB).

It catalyses the reaction acetoacetate + butanoyl-CoA = acetoacetyl-CoA + butanoate. It carries out the reaction acetoacetate + acetyl-CoA = acetoacetyl-CoA + acetate. Its activity is regulated as follows. The acetate and butyrate conversion reactions are inhibited in vitro by physiological levels of acetone and butanol. Its function is as follows. Catalyzes the transfer of CoA from acetoacetyl-CoA to acetate, butyrate and propionate. Also shows low activity with valerate, isobutyrate and crotonate. Plays an important role in the metabolic shift between the acid-producing and solvent-forming states of C.acetobutylicum. Acts mainly to detoxify the medium by removing the acetate and butyrate excreted earlier in the fermentation. This chain is Acetoacetyl-CoA:acetate/butyrate CoA transferase alpha subunit, found in Clostridium acetobutylicum (strain ATCC 824 / DSM 792 / JCM 1419 / IAM 19013 / LMG 5710 / NBRC 13948 / NRRL B-527 / VKM B-1787 / 2291 / W).